We begin with the raw amino-acid sequence, 233 residues long: MTPHINAKIGDFYPQCLLCGDPLRVSYIAKNFLQDAKEITNVRNMLGFSGKYKGKGISLMGHGMGIASCTIYVTELIKTYQVKELLRIGTCGAISPKVGLKDIVMATGASTDSKTNRVRFLNHDLSATPDFELSLRAYQTAKRLGIDLKIGNVFSSDFFYSFETHAFGLMAQYNHLAIEMEAAGLYATAMELNAKALCLCSVSDHLITKEALSPKERIESFDNMITLALEMMS.

Position 4 (H4) interacts with a purine D-ribonucleoside. Residues G20, R24, R43, and 87 to 90 contribute to the phosphate site; that span reads RIGT. Residues 179–181 and 203–204 contribute to the a purine D-ribonucleoside site; these read EME and SD. Catalysis depends on D204, which acts as the Proton donor.

The protein belongs to the PNP/UDP phosphorylase family. In terms of assembly, homohexamer; trimer of homodimers.

The enzyme catalyses a purine D-ribonucleoside + phosphate = a purine nucleobase + alpha-D-ribose 1-phosphate. The catalysed reaction is a purine 2'-deoxy-D-ribonucleoside + phosphate = a purine nucleobase + 2-deoxy-alpha-D-ribose 1-phosphate. In terms of biological role, catalyzes the reversible phosphorolytic breakdown of the N-glycosidic bond in the beta-(deoxy)ribonucleoside molecules, with the formation of the corresponding free purine bases and pentose-1-phosphate. This is Purine nucleoside phosphorylase DeoD-type from Helicobacter pylori (strain J99 / ATCC 700824) (Campylobacter pylori J99).